The chain runs to 137 residues: Large ribosomal subunit protein uL16 (137 aa).

Residues 1 to 17 are compositionally biased toward basic residues; it reads MLQPKRTKFRKTHKGRN. The segment at 1–24 is disordered; sequence MLQPKRTKFRKTHKGRNRGLANTG.

The protein belongs to the universal ribosomal protein uL16 family. As to quaternary structure, part of the 50S ribosomal subunit.

Functionally, binds 23S rRNA and is also seen to make contacts with the A and possibly P site tRNAs. This Aeromonas salmonicida (strain A449) protein is Large ribosomal subunit protein uL16.